The primary structure comprises 426 residues: 3-phosphoshikimate 1-carboxyvinyltransferase (426 aa).

Positions 22, 23, and 27 each coordinate 3-phosphoshikimate. Lysine 22 is a phosphoenolpyruvate binding site. Glycine 96 and arginine 124 together coordinate phosphoenolpyruvate. 7 residues coordinate 3-phosphoshikimate: serine 170, serine 171, glutamine 172, serine 198, aspartate 314, asparagine 337, and lysine 341. A phosphoenolpyruvate-binding site is contributed by glutamine 172. Aspartate 314 acts as the Proton acceptor in catalysis. Phosphoenolpyruvate contacts are provided by arginine 345, arginine 387, and lysine 412.

The protein belongs to the EPSP synthase family. In terms of assembly, monomer.

It localises to the cytoplasm. The enzyme catalyses 3-phosphoshikimate + phosphoenolpyruvate = 5-O-(1-carboxyvinyl)-3-phosphoshikimate + phosphate. It participates in metabolic intermediate biosynthesis; chorismate biosynthesis; chorismate from D-erythrose 4-phosphate and phosphoenolpyruvate: step 6/7. Its function is as follows. Catalyzes the transfer of the enolpyruvyl moiety of phosphoenolpyruvate (PEP) to the 5-hydroxyl of shikimate-3-phosphate (S3P) to produce enolpyruvyl shikimate-3-phosphate and inorganic phosphate. This is 3-phosphoshikimate 1-carboxyvinyltransferase from Photobacterium damsela subsp. piscicida (Pasteurella piscicida).